Here is a 623-residue protein sequence, read N- to C-terminus: DNA-directed RNA polymerase subunit gamma (623 aa).

Residues C70, C72, C85, and C88 each coordinate Zn(2+). Positions 466, 468, and 470 each coordinate Mg(2+).

It belongs to the RNA polymerase beta' chain family. RpoC1 subfamily. In terms of assembly, in cyanobacteria the RNAP catalytic core is composed of 2 alpha, 1 beta, 1 beta', 1 gamma and 1 omega subunit. When a sigma factor is associated with the core the holoenzyme is formed, which can initiate transcription. It depends on Mg(2+) as a cofactor. The cofactor is Zn(2+).

It carries out the reaction RNA(n) + a ribonucleoside 5'-triphosphate = RNA(n+1) + diphosphate. DNA-dependent RNA polymerase catalyzes the transcription of DNA into RNA using the four ribonucleoside triphosphates as substrates. This is DNA-directed RNA polymerase subunit gamma from Acaryochloris marina (strain MBIC 11017).